The sequence spans 202 residues: Small ribosomal subunit protein uS4c (202 aa).

Residues 90-152 (MRLDNVIFRL…RKSESIINKN (63 aa)) form the S4 RNA-binding domain.

This sequence belongs to the universal ribosomal protein uS4 family. As to quaternary structure, part of the 30S ribosomal subunit. Contacts protein S5. The interaction surface between S4 and S5 is involved in control of translational fidelity.

It localises to the plastid. It is found in the chloroplast. One of the primary rRNA binding proteins, it binds directly to 16S rRNA where it nucleates assembly of the body of the 30S subunit. Functionally, with S5 and S12 plays an important role in translational accuracy. The chain is Small ribosomal subunit protein uS4c (rps4) from Dendrohypopterygium filiculiforme (Moss).